A 597-amino-acid polypeptide reads, in one-letter code: Elongation factor 4 (597 aa).

Positions 2–184 (KNIRNFSIIA…RLVRDIPAPE (183 aa)) constitute a tr-type G domain. Residues 14–19 (DHGKST) and 131–134 (NKID) each bind GTP.

It belongs to the TRAFAC class translation factor GTPase superfamily. Classic translation factor GTPase family. LepA subfamily.

The protein resides in the cell inner membrane. The catalysed reaction is GTP + H2O = GDP + phosphate + H(+). In terms of biological role, required for accurate and efficient protein synthesis under certain stress conditions. May act as a fidelity factor of the translation reaction, by catalyzing a one-codon backward translocation of tRNAs on improperly translocated ribosomes. Back-translocation proceeds from a post-translocation (POST) complex to a pre-translocation (PRE) complex, thus giving elongation factor G a second chance to translocate the tRNAs correctly. Binds to ribosomes in a GTP-dependent manner. This chain is Elongation factor 4, found in Edwardsiella ictaluri (strain 93-146).